Consider the following 357-residue polypeptide: Homoserine kinase (357 aa).

Belongs to the GHMP kinase family. Homoserine kinase subfamily. Homodimer.

The enzyme catalyses L-homoserine + ATP = O-phospho-L-homoserine + ADP + H(+). The protein operates within amino-acid biosynthesis; L-threonine biosynthesis; L-threonine from L-aspartate: step 4/5. Its function is as follows. Commits homoserine to the threonine biosynthesis pathway by catalyzing its O-phosphorylation. This is Homoserine kinase (THR1) from Candida albicans (strain SC5314 / ATCC MYA-2876) (Yeast).